A 162-amino-acid polypeptide reads, in one-letter code: Shikimate kinase (162 aa).

ATP is bound at residue Gly11 to Ser16. Ser15 contacts Mg(2+). Residues Asp33, Arg57, and Gly80 each coordinate substrate. The tract at residues Asn109 to Thr123 is LID domain. Arg116 contacts ATP. Arg132 is a binding site for substrate.

This sequence belongs to the shikimate kinase family. Monomer. The cofactor is Mg(2+).

It localises to the cytoplasm. The enzyme catalyses shikimate + ATP = 3-phosphoshikimate + ADP + H(+). It participates in metabolic intermediate biosynthesis; chorismate biosynthesis; chorismate from D-erythrose 4-phosphate and phosphoenolpyruvate: step 5/7. Functionally, catalyzes the specific phosphorylation of the 3-hydroxyl group of shikimic acid using ATP as a cosubstrate. The protein is Shikimate kinase (aroK) of Helicobacter pylori (strain ATCC 700392 / 26695) (Campylobacter pylori).